Consider the following 555-residue polypeptide: Protein peste (555 aa).

At 1–7 (MTSRTRH) the chain is on the cytoplasmic side. The helical transmembrane segment at 8–28 (CARLGIVLLGICCIASGIYLF) threads the bilayer. The Extracellular segment spans residues 29-434 (RNWIDMFTRM…VRVSEEIAAD (406 aa)). 7 N-linked (GlcNAc...) asparagine glycosylation sites follow: N70, N110, N129, N213, N242, N312, and N342. A helical membrane pass occupies residues 435–455 (IALVPLIVLLGQIVTGILLAG). Topologically, residues 456–555 (GLICTCWYPT…SEDSPDVVVR (100 aa)) are cytoplasmic.

Belongs to the CD36 family.

It localises to the cell membrane. In terms of biological role, (Microbial infection) Plays a role in mycobacterial infection. Mediates infection by M.fortuitum and uptake of M.smegmatis. The polypeptide is Protein peste (Drosophila melanogaster (Fruit fly)).